Here is a 284-residue protein sequence, read N- to C-terminus: L-ribulose-5-phosphate 3-epimerase UlaE (284 aa).

This sequence belongs to the L-ribulose-5-phosphate 3-epimerase family.

The catalysed reaction is L-ribulose 5-phosphate = L-xylulose 5-phosphate. It participates in cofactor degradation; L-ascorbate degradation; D-xylulose 5-phosphate from L-ascorbate: step 3/4. Functionally, catalyzes the isomerization of L-xylulose-5-phosphate to L-ribulose-5-phosphate. Is involved in the anaerobic L-ascorbate utilization. The sequence is that of L-ribulose-5-phosphate 3-epimerase UlaE from Shigella flexneri.